The following is a 364-amino-acid chain: Chorismate synthase (364 aa).

NADP(+) is bound at residue arginine 47. Residues 124 to 126 (RGS), 240 to 241 (NA), glycine 284, 299 to 303 (KPTPS), and arginine 326 each bind FMN.

It belongs to the chorismate synthase family. Requires FMNH2 as cofactor.

It catalyses the reaction 5-O-(1-carboxyvinyl)-3-phosphoshikimate = chorismate + phosphate. Its pathway is metabolic intermediate biosynthesis; chorismate biosynthesis; chorismate from D-erythrose 4-phosphate and phosphoenolpyruvate: step 7/7. In terms of biological role, catalyzes the anti-1,4-elimination of the C-3 phosphate and the C-6 proR hydrogen from 5-enolpyruvylshikimate-3-phosphate (EPSP) to yield chorismate, which is the branch point compound that serves as the starting substrate for the three terminal pathways of aromatic amino acid biosynthesis. This reaction introduces a second double bond into the aromatic ring system. This is Chorismate synthase from Methanobrevibacter smithii (strain ATCC 35061 / DSM 861 / OCM 144 / PS).